A 471-amino-acid chain; its full sequence is ATP synthase subunit beta (471 aa).

153–160 contributes to the ATP binding site; sequence GGAGVGKT.

The protein belongs to the ATPase alpha/beta chains family. As to quaternary structure, F-type ATPases have 2 components, CF(1) - the catalytic core - and CF(0) - the membrane proton channel. CF(1) has five subunits: alpha(3), beta(3), gamma(1), delta(1), epsilon(1). CF(0) has three main subunits: a(1), b(2) and c(9-12). The alpha and beta chains form an alternating ring which encloses part of the gamma chain. CF(1) is attached to CF(0) by a central stalk formed by the gamma and epsilon chains, while a peripheral stalk is formed by the delta and b chains.

The protein localises to the cell membrane. The enzyme catalyses ATP + H2O + 4 H(+)(in) = ADP + phosphate + 5 H(+)(out). Functionally, produces ATP from ADP in the presence of a proton gradient across the membrane. The catalytic sites are hosted primarily by the beta subunits. This Levilactobacillus brevis (strain ATCC 367 / BCRC 12310 / CIP 105137 / JCM 1170 / LMG 11437 / NCIMB 947 / NCTC 947) (Lactobacillus brevis) protein is ATP synthase subunit beta.